A 736-amino-acid polypeptide reads, in one-letter code: Polyribonucleotide nucleotidyltransferase (736 aa).

Mg(2+) is bound by residues D506 and D512. Residues 573–632 enclose the KH domain; it reads PRLTTIQVPVDAIGLIIGKGGETIRSITEETGAEINIEDDGTVTIACSSVEGTHAALATI. The S1 motif domain maps to 642–717; that stretch reads GTIYLGKVRD…GKTRFALSMR (76 aa).

The protein belongs to the polyribonucleotide nucleotidyltransferase family. Mg(2+) serves as cofactor.

Its subcellular location is the cytoplasm. It catalyses the reaction RNA(n+1) + phosphate = RNA(n) + a ribonucleoside 5'-diphosphate. In terms of biological role, involved in mRNA degradation. Catalyzes the phosphorolysis of single-stranded polyribonucleotides processively in the 3'- to 5'-direction. The sequence is that of Polyribonucleotide nucleotidyltransferase from Chlorobium limicola (strain DSM 245 / NBRC 103803 / 6330).